Here is a 1530-residue protein sequence, read N- to C-terminus: Synaptonemal complex protein 2 (1530 aa).

The span at 439 to 461 shows a compositional bias: basic and acidic residues; sequence EKSKSPKEFAKPSKYIKNSDKGN. The interval 439–480 is disordered; it reads EKSKSPKEFAKPSKYIKNSDKGNRNNSQLEKTTPSKRKMSEA. Phosphoserine is present on residues Ser457 and Ser465. Thr471 is modified (phosphothreonine). 4 positions are modified to phosphoserine: Ser494, Ser519, Ser529, and Ser538. The segment at 496–555 is disordered; the sequence is VLFSNTSIPPRRRRIKPPLQMTSSAEKPSVSQTSENRVDNAASLKSRSSEGRHRRDNIDK. The segment covering 515–530 has biased composition (polar residues); it reads QMTSSAEKPSVSQTSE. Residues 542–555 are compositionally biased toward basic and acidic residues; that stretch reads RSSEGRHRRDNIDK. Thr619 carries the post-translational modification Phosphothreonine. Disordered regions lie at residues 653–676, 693–717, and 755–795; these read QKSS…KKEQ, HNQQ…SDWP, and DKNP…SKGK. 2 positions are modified to phosphoserine: Ser660 and Ser664. 2 stretches are compositionally biased toward polar residues: residues 695 to 713 and 755 to 764; these read QQQN…NAKQ and DKNPSASKNV. Ser936 is modified (phosphoserine). Thr938 carries the phosphothreonine modification. The segment at 962–1003 is disordered; sequence QLIDYSRNKNVKNHKSGKSRSSLEKGQPSSKMTPSKNITKKM. Positions 970 to 979 are enriched in basic residues; it reads KNVKNHKSGK. The segment covering 988 to 998 has biased composition (polar residues); sequence QPSSKMTPSKN. Phosphoserine is present on residues Ser1136, Ser1138, Ser1145, Ser1161, and Ser1177. Thr1189 carries the post-translational modification Phosphothreonine. Ser1204, Ser1234, Ser1253, Ser1295, and Ser1297 each carry phosphoserine. At Thr1339 the chain carries Phosphothreonine.

It belongs to the SYCP2 family. In terms of assembly, component of the lateral elements of synaptonemal complexes. Heterodimer with SYCP3. Interacts with SMC1A and SMC3. Interacts with TEX11. In terms of processing, phosphorylated.

Its subcellular location is the nucleus. It localises to the chromosome. Functionally, major component of the axial/lateral elements of synaptonemal complexes (SCS) during meiotic prophase. Plays a role in the assembly of synaptonemal complexes. Required for normal meiotic chromosome synapsis during oocyte and spermatocyte development and for normal male and female fertility. Required for insertion of SYCP3 into synaptonemal complexes. May be involved in the organization of chromatin by temporarily binding to DNA scaffold attachment regions. Requires SYCP3, but not SYCP1, in order to be incorporated into the axial/lateral elements. The sequence is that of Synaptonemal complex protein 2 (SYCP2) from Homo sapiens (Human).